A 234-amino-acid polypeptide reads, in one-letter code: UDP-2,3-diacylglucosamine hydrolase (234 aa).

Mn(2+) contacts are provided by aspartate 9, histidine 11, aspartate 42, asparagine 80, and histidine 115. 80–81 (NR) lines the substrate pocket. The substrate site is built by aspartate 123, serine 161, lysine 165, lysine 168, and histidine 196. The Mn(2+) site is built by histidine 196 and histidine 198.

The protein belongs to the LpxH family. Mn(2+) is required as a cofactor.

Its subcellular location is the cell inner membrane. It carries out the reaction UDP-2-N,3-O-bis[(3R)-3-hydroxytetradecanoyl]-alpha-D-glucosamine + H2O = 2-N,3-O-bis[(3R)-3-hydroxytetradecanoyl]-alpha-D-glucosaminyl 1-phosphate + UMP + 2 H(+). Its pathway is glycolipid biosynthesis; lipid IV(A) biosynthesis; lipid IV(A) from (3R)-3-hydroxytetradecanoyl-[acyl-carrier-protein] and UDP-N-acetyl-alpha-D-glucosamine: step 4/6. Its function is as follows. Hydrolyzes the pyrophosphate bond of UDP-2,3-diacylglucosamine to yield 2,3-diacylglucosamine 1-phosphate (lipid X) and UMP by catalyzing the attack of water at the alpha-P atom. Involved in the biosynthesis of lipid A, a phosphorylated glycolipid that anchors the lipopolysaccharide to the outer membrane of the cell. This is UDP-2,3-diacylglucosamine hydrolase from Histophilus somni (strain 129Pt) (Haemophilus somnus).